Consider the following 119-residue polypeptide: Ribonuclease P protein component (119 aa).

Belongs to the RnpA family. Consists of a catalytic RNA component (M1 or rnpB) and a protein subunit.

It catalyses the reaction Endonucleolytic cleavage of RNA, removing 5'-extranucleotides from tRNA precursor.. Its function is as follows. RNaseP catalyzes the removal of the 5'-leader sequence from pre-tRNA to produce the mature 5'-terminus. It can also cleave other RNA substrates such as 4.5S RNA. The protein component plays an auxiliary but essential role in vivo by binding to the 5'-leader sequence and broadening the substrate specificity of the ribozyme. The sequence is that of Ribonuclease P protein component from Salmonella arizonae (strain ATCC BAA-731 / CDC346-86 / RSK2980).